Reading from the N-terminus, the 141-residue chain is MKKDNNIINFVNFPKQHVPLLKIAAATVLKSEKIKRYQVNFIMVDDKEIRKLNTKYRKIKRITDVISFLVVPEFFMGDIYISKTRSQEQAKEYSNTWQQELAYLVIHGLLHLCGYTDYDAVNKTKMFTKQDKIFKCLFYRL.

3 residues coordinate Zn(2+): His107, His111, and Asp117.

It belongs to the endoribonuclease YbeY family. Requires Zn(2+) as cofactor.

Its subcellular location is the cytoplasm. Functionally, single strand-specific metallo-endoribonuclease involved in late-stage 70S ribosome quality control and in maturation of the 3' terminus of the 16S rRNA. The protein is Endoribonuclease YbeY of Endomicrobium trichonymphae.